We begin with the raw amino-acid sequence, 165 residues long: Ribosome maturation factor RimM (165 aa).

In terms of domain architecture, PRC barrel spans 92-163 (EARHYWADLE…RVVVDPPEGL (72 aa)).

It belongs to the RimM family. As to quaternary structure, binds ribosomal protein uS19.

The protein localises to the cytoplasm. An accessory protein needed during the final step in the assembly of 30S ribosomal subunit, possibly for assembly of the head region. Essential for efficient processing of 16S rRNA. May be needed both before and after RbfA during the maturation of 16S rRNA. It has affinity for free ribosomal 30S subunits but not for 70S ribosomes. In Anaeromyxobacter sp. (strain Fw109-5), this protein is Ribosome maturation factor RimM.